Reading from the N-terminus, the 689-residue chain is Methionine--tRNA ligase (689 aa).

The 'HIGH' region signature appears at 15–25 (PYANGPIHLGH). Residues Cys-146, Cys-149, Cys-159, and Cys-162 each contribute to the Zn(2+) site. Positions 332-336 (KMSKS) match the 'KMSKS' region motif. Lys-335 is an ATP binding site. The disordered stretch occupies residues 554 to 574 (DAPKTAAPEKTAEASSVSSEP). Positions 588-689 (DFAKIDLRIA…EGAQPGMRVK (102 aa)) constitute a tRNA-binding domain.

This sequence belongs to the class-I aminoacyl-tRNA synthetase family. MetG type 1 subfamily. In terms of assembly, homodimer. The cofactor is Zn(2+).

It localises to the cytoplasm. It catalyses the reaction tRNA(Met) + L-methionine + ATP = L-methionyl-tRNA(Met) + AMP + diphosphate. In terms of biological role, is required not only for elongation of protein synthesis but also for the initiation of all mRNA translation through initiator tRNA(fMet) aminoacylation. The sequence is that of Methionine--tRNA ligase from Shewanella baltica (strain OS185).